We begin with the raw amino-acid sequence, 625 residues long: Glucokinase regulatory protein (625 aa).

SIS domains follow at residues 90–286 (VQEV…QGIA) and 320–499 (VSTS…LLGK). Residues 109–110 (TS), Glu-153, and 179–181 (SVG) each bind beta-D-fructose 1-phosphate. 109–110 (TS) is a binding site for beta-D-fructose 6-phosphate. A beta-D-fructose 6-phosphate-binding site is contributed by 179–181 (SVG). The interval 199–200 (AV) is important for interaction with GCK. Position 348 (Glu-348) interacts with beta-D-fructose 1-phosphate. Residues 463–465 (LLF) form an essential for interaction with GCK region. Lys-514 lines the beta-D-fructose 1-phosphate pocket. Lys-514 is a binding site for beta-D-fructose 6-phosphate.

Belongs to the GCKR family. Interacts (fructose 6-phosphate bound form) with GCK. Found in liver and pancreas. Not detected in muscle, brain, heart, thymus, intestine, uterus, adipose tissue, kidney, adrenal, lung or spleen.

The protein localises to the cytoplasm. It is found in the nucleus. Its subcellular location is the mitochondrion. Functionally, regulates glucokinase (GCK) by forming an inactive complex with this enzyme. Acts by promoting GCK recruitment to the nucleus, possibly to provide a reserve of GCK that can be quickly released in the cytoplasm after a meal. The affinity of GCKR for GCK is modulated by fructose metabolites: GCKR with bound fructose 6-phosphate has increased affinity for GCK, while GCKR with bound fructose 1-phosphate has strongly decreased affinity for GCK and does not inhibit GCK activity. The sequence is that of Glucokinase regulatory protein from Homo sapiens (Human).